A 1697-amino-acid chain; its full sequence is Histone acetyltransferase HAC1 (1697 aa).

The segment covering Met-1–Thr-16 has biased composition (polar residues). 6 disordered regions span residues Met-1 to Ser-45, Ser-202 to Thr-221, Ser-385 to Arg-439, His-555 to Arg-574, Arg-583 to Asp-631, and Ile-843 to Glu-901. Composition is skewed to low complexity over residues Met-17–Asn-28 and Ser-202–Ser-217. A compositionally biased stretch (polar residues) spans Ser-385–His-398. The segment covering Gln-399–Arg-439 has biased composition (low complexity). 2 stretches are compositionally biased toward polar residues: residues Trp-556–Ser-571 and Met-584–Gly-628. The segment at Asn-629–Val-709 adopts a TAZ-type 1 zinc-finger fold. The span at Thr-873–Glu-901 shows a compositional bias: basic and acidic residues. Residues His-989–Ala-1066 form a PHD-type zinc finger. The CBP/p300-type HAT domain occupies Val-1081–Ala-1517. Acetyl-CoA contacts are provided by residues Leu-1204–Ser-1206, Arg-1223–Thr-1224, and Trp-1279. 2 consecutive ZZ-type zinc fingers follow at residues His-1399–Ile-1462 and Ala-1519–Asp-1572. The Zn(2+) site is built by Cys-1404, Cys-1407, Cys-1419, Cys-1422, Cys-1428, Cys-1431, His-1444, His-1452, Cys-1524, Cys-1527, Cys-1539, Cys-1542, Cys-1548, Cys-1551, His-1560, and His-1562. A TAZ-type 2 zinc finger spans residues Glu-1579–Leu-1662.

As to expression, rosette leaves, stems and flowers.

It localises to the nucleus. The catalysed reaction is L-lysyl-[protein] + acetyl-CoA = N(6)-acetyl-L-lysyl-[protein] + CoA + H(+). Its function is as follows. Acetyltransferase enzyme. Acetylates histones, giving a specific tag for transcriptional activation. The sequence is that of Histone acetyltransferase HAC1 (HAC1) from Arabidopsis thaliana (Mouse-ear cress).